A 1052-amino-acid chain; its full sequence is F-box/WD repeat-containing protein 10 (1052 aa).

The stretch at 169 to 206 (GLNQDITDVCFSPEKDHSSKSATSQVYWTAKTQHTSLP) is one WD 1 repeat. The region spanning 276 to 323 (DFIRYLPIHLSKYILRMLDRHTLNKCASVSQHWAAMAQQVKMDLSAHG) is the F-box domain. WD repeat units follow at residues 409–447 (SDTW…AIPV), 451–490 (GHAG…CTRI), 493–532 (GHQG…KTFR), 534–569 (KDPI…LVKT), 572–609 (GHEG…ERCL), and 611–652 (AFKH…KVLK). The stretch at 690 to 719 (YAVEKTKQKKNKEKEEEKEENSLMEILSKC) forms a coiled coil. Positions 766-805 (LQSQGKSKSPRRDADDVEKAQKQGQLETPGKLPSHPKKKS) are disordered. Residues 775 to 786 (PRRDADDVEKAQ) show a composition bias toward basic and acidic residues. Positions 986-1010 (VLLTVKEEKEHQEAKMKEYQAREST) form a coiled coil.

Functionally, probable substrate-recognition component of a SCF (SKP1-CUL1-F-box protein)-type E3 ubiquitin ligase complex which mediates the ubiquitination and subsequent proteasomal degradation of target proteins. Overexpression is leading to degradation of CBX5 and CBX1. The protein is F-box/WD repeat-containing protein 10 (FBXW10) of Homo sapiens (Human).